The following is a 239-amino-acid chain: Phosphothreonine lyase OspF (239 aa).

Catalysis depends on H104, which acts as the Proton donor. K134 functions as the Proton acceptor in the catalytic mechanism.

Belongs to the phosphothreonine lyase family.

The protein localises to the secreted. Functionally, catalyzes the removal of the phosphate group from the phosphothreonine in the mitogen-activated protein kinases such as MAPK2/ERK2, MAPK3/ERK1, MAPK8 and MAPK14 in an irreversible reaction, thus preventing the downstream phosphorylation of histone H3. This epigenetic modification results in inhibition of the transcription of a specific subset of pro-inflammatory genes, and ultimately to a reduced immune response against the invading pathogen. The diminished immune response enhances the bacterium's ability to disseminate and multiply within the host. This is Phosphothreonine lyase OspF (ospF) from Shigella sonnei (strain Ss046).